A 423-amino-acid polypeptide reads, in one-letter code: Core protease OPG082 (423 aa).

Catalysis depends on residues H241, D248, and C328.

Belongs to the peptidase C57 family.

The protein resides in the virion. Late protein responsible for processing most or all of the viral core and membrane proteins known to undergo morphogenesis-associated proteolysis. These proteolytic events are involved in the transformation of immature virions (IV) into mature virions (MV). Probably cleaves at least the OPG129, OPG136, OPG098, and OPG144 precursors preferentially at Ala-Gly-|-Ala motifs. Also seems to process Ala-Gly-|-Ser and Ala-Gly-|-Thr motifs. This Homo sapiens (Human) protein is Core protease OPG082 (OPG083).